The sequence spans 904 residues: MSYIKSNLELYQQYTAMAPKLLARISKLLMICQNAGISVPKGIRNIFEFTWEELISDPSVPTPSDILGLEVSFGAPLVVLMEPTFVQVPTLKKPLPPPPPAPPRPVLLATTGAAKRSTLSPTMARQVRTHQETLNRFQQQSIHLLTELLRLKMKAMVESMSVGANPLDITRRFVEASQLLHLNAKEMAFNCLISTAGRSGYSSGQLWKESLANMSAIGVNSPYQLIYHSSTACLSFSLSAGKEAKKKIGKSRTTEDVSMPPLHRGVGTPANSLEFSDPCPEAREKLQELCRHIEAERATWKGRNISYPMILRNYKAKMPSHLMLARKGDSQTPGLHYPPTAGAQTLSPTSHPSSANHHFSQHCQEGKAPKKAFKFHYTFYDGSSFVYYPSGNVAVCQIPTCCRGRTITCLFNDIPGFSLLALFNTEGQGCVHYNLKTSCPYVLILDEEGGTTNDQQGYVVHKWSWTSRTETLLSLEYKVNEEMKLKVLGQDSITVTFTSLNETVTLTVSANNCPHGMAYDKRLNRRISNMDDKVYKMSRALAEIKKRFQKTVTQFINSILLAAGLFTIEYPTKKEEEEFVRFKMRSRTHPERLPKLSLYSGESLLRSQSGHLESSIAETLKDEPESAPVSPVRKTTKIHTKAKVTSRGKAREGRSPTRWAALPSDCPLVLRKLMLKEDTRAGCKCLVKAPLVSDVELERFLLAPRDPSQVLVFGIISSQNYTSTGQLQWLLNTLYNHQQRGRGSPCIQCRYDSYRLLQYDLDSPLQEDPPLMVKKNSVVQGMILMFAGGKLIFGGRVLNGYGLSKQNLLKQIFRSQQDYKMGYFLPDDYKFSVPNSVLSLEDSESVKKAESEDIQGSSSSLALEDYVEKELSLEAEKTREPEVELHPLSRDSKITSWKKQASKK.

Disordered regions lie at residues 247–275 and 328–360; these read KIGK…SLEF and GDSQ…HHFS. Polar residues predominate over residues 342–360; the sequence is GAQTLSPTSHPSSANHHFS. A helical membrane pass occupies residues 778–798; that stretch reads VVQGMILMFAGGKLIFGGRVL.

The protein localises to the membrane. This is an uncharacterized protein from Homo sapiens (Human).